The following is a 160-amino-acid chain: Phosphopantetheine adenylyltransferase (160 aa).

Ser10 is a binding site for substrate. Residues 10–11 and His18 contribute to the ATP site; that span reads SF. Lys42, Thr74, and Arg88 together coordinate substrate. Residues 89–91, Glu99, and 124–130 contribute to the ATP site; these read GLR and YSFISST.

The protein belongs to the bacterial CoaD family. In terms of assembly, homohexamer. Requires Mg(2+) as cofactor.

It localises to the cytoplasm. It catalyses the reaction (R)-4'-phosphopantetheine + ATP + H(+) = 3'-dephospho-CoA + diphosphate. The protein operates within cofactor biosynthesis; coenzyme A biosynthesis; CoA from (R)-pantothenate: step 4/5. In terms of biological role, reversibly transfers an adenylyl group from ATP to 4'-phosphopantetheine, yielding dephospho-CoA (dPCoA) and pyrophosphate. The polypeptide is Phosphopantetheine adenylyltransferase (Leptospira interrogans serogroup Icterohaemorrhagiae serovar copenhageni (strain Fiocruz L1-130)).